Consider the following 184-residue polypeptide: ATP synthase subunit b, chloroplastic (184 aa).

Residues 27 to 49 (LATNPINLSVVLGVLIFFGKGVL) form a helical membrane-spanning segment.

It belongs to the ATPase B chain family. In terms of assembly, F-type ATPases have 2 components, F(1) - the catalytic core - and F(0) - the membrane proton channel. F(1) has five subunits: alpha(3), beta(3), gamma(1), delta(1), epsilon(1). F(0) has four main subunits: a(1), b(1), b'(1) and c(10-14). The alpha and beta chains form an alternating ring which encloses part of the gamma chain. F(1) is attached to F(0) by a central stalk formed by the gamma and epsilon chains, while a peripheral stalk is formed by the delta, b and b' chains.

It is found in the plastid. The protein resides in the chloroplast thylakoid membrane. Its function is as follows. F(1)F(0) ATP synthase produces ATP from ADP in the presence of a proton or sodium gradient. F-type ATPases consist of two structural domains, F(1) containing the extramembraneous catalytic core and F(0) containing the membrane proton channel, linked together by a central stalk and a peripheral stalk. During catalysis, ATP synthesis in the catalytic domain of F(1) is coupled via a rotary mechanism of the central stalk subunits to proton translocation. Component of the F(0) channel, it forms part of the peripheral stalk, linking F(1) to F(0). The sequence is that of ATP synthase subunit b, chloroplastic from Ceratophyllum demersum (Rigid hornwort).